A 79-amino-acid chain; its full sequence is Conotoxin ArMSGL-0122 (79 aa).

A signal peptide spans 1–20; sequence MSRLGIMVLTLLLLVFIVTS. Residues 21-44 constitute a propeptide that is removed on maturation; the sequence is HQDAGEKQATQRAAINFRWKRSLT. Cystine bridges form between C52/C64, C56/C73, and C63/C77. A Leucine amide modification is found at L78.

The protein belongs to the conotoxin O3 superfamily. In terms of tissue distribution, expressed by the venom duct.

The protein resides in the secreted. This Conus arenatus (Sand-dusted cone) protein is Conotoxin ArMSGL-0122.